We begin with the raw amino-acid sequence, 37 residues long: Small ribosomal subunit protein uS19 (37 aa).

It belongs to the universal ribosomal protein uS19 family.

This chain is Small ribosomal subunit protein uS19 (RPS15), found in Helix lucorum (Snail).